Reading from the N-terminus, the 361-residue chain is Phenylalanine 4-monooxygenase, chloroplastic (361 aa).

Residues 1–55 (MLALRQGALLLSARGGQTTHDNLQLCAGPSRRPRARWISSAPRPSTLVERHIRPQ) constitute a chloroplast transit peptide. The disordered stretch occupies residues 47-67 (LVERHIRPQASTASDATTSTS). Low complexity predominate over residues 56-67 (ASTASDATTSTS). Residues H227, H232, and E272 each contribute to the Fe cation site.

It belongs to the biopterin-dependent aromatic amino acid hydroxylase family. Fe(2+) is required as a cofactor.

Its subcellular location is the plastid. The protein localises to the chloroplast. The enzyme catalyses (6R)-L-erythro-5,6,7,8-tetrahydrobiopterin + L-phenylalanine + O2 = (4aS,6R)-4a-hydroxy-L-erythro-5,6,7,8-tetrahydrobiopterin + L-tyrosine. In terms of biological role, catalyzes the hydroxylation of L-phenylalanine to L-tyrosine. Can functionally complement an Escherichia coli tyrosine auxotroph. This is Phenylalanine 4-monooxygenase, chloroplastic from Chlamydomonas reinhardtii (Chlamydomonas smithii).